The sequence spans 448 residues: Homogentisate 1,2-dioxygenase (448 aa).

Residue His-303 is the Proton acceptor of the active site. 2 residues coordinate Fe cation: His-346 and Glu-352. Residues Tyr-361 and His-382 each coordinate homogentisate. His-382 lines the Fe cation pocket.

The protein belongs to the homogentisate dioxygenase family. As to quaternary structure, hexamer; dimer of trimers. It depends on Fe cation as a cofactor.

The catalysed reaction is homogentisate + O2 = 4-maleylacetoacetate + H(+). Its pathway is amino-acid degradation; L-phenylalanine degradation; acetoacetate and fumarate from L-phenylalanine: step 4/6. Involved in the catabolism of homogentisate (2,5-dihydroxyphenylacetate or 2,5-OH-PhAc), a central intermediate in the degradation of phenylalanine and tyrosine. Catalyzes the oxidative ring cleavage of the aromatic ring of homogentisate to yield maleylacetoacetate. In Rhodopseudomonas palustris (strain TIE-1), this protein is Homogentisate 1,2-dioxygenase.